Here is a 174-residue protein sequence, read N- to C-terminus: ATP-dependent protease subunit HslV (174 aa).

Residue threonine 2 is part of the active site. Glycine 157, cysteine 160, and threonine 163 together coordinate Na(+).

It belongs to the peptidase T1B family. HslV subfamily. A double ring-shaped homohexamer of HslV is capped on each side by a ring-shaped HslU homohexamer. The assembly of the HslU/HslV complex is dependent on binding of ATP.

It localises to the cytoplasm. It carries out the reaction ATP-dependent cleavage of peptide bonds with broad specificity.. With respect to regulation, allosterically activated by HslU binding. In terms of biological role, protease subunit of a proteasome-like degradation complex believed to be a general protein degrading machinery. In Shewanella woodyi (strain ATCC 51908 / MS32), this protein is ATP-dependent protease subunit HslV.